Here is a 520-residue protein sequence, read N- to C-terminus: Putative cytochrome P450 CYP13A4 (520 aa).

Residue cysteine 464 coordinates heme.

The protein belongs to the cytochrome P450 family. It depends on heme as a cofactor.

Cytochromes P450 are a group of heme-thiolate monooxygenases. They oxidize a variety of structurally unrelated compounds, including steroids, fatty acids, and xenobiotics. This Caenorhabditis elegans protein is Putative cytochrome P450 CYP13A4 (cyp-13A4).